The primary structure comprises 498 residues: Cytochrome P450 monooxygenase 71 (498 aa).

The helical transmembrane segment at 7–24 threads the bilayer; sequence YVFALLGILATLYFVRWS. N-linked (GlcNAc...) asparagine glycosylation occurs at N425. Heme is bound at residue C440.

This sequence belongs to the cytochrome P450 family. It depends on heme as a cofactor.

Its subcellular location is the membrane. Its pathway is secondary metabolite biosynthesis. Functionally, cytochrome P450 monooxygenase that is able to use dehydroabietic acid and testosterone as substrates for oxidation, suggesting that the natural substrate(s) may be structurally related to steroid compounds. In Postia placenta (strain ATCC 44394 / Madison 698-R) (Brown rot fungus), this protein is Cytochrome P450 monooxygenase 71.